Here is a 199-residue protein sequence, read N- to C-terminus: dITP/XTP pyrophosphatase (199 aa).

Position 8 to 13 (8 to 13 (SGNAGK)) interacts with substrate. The active-site Proton acceptor is Asp69. Asp69 lines the Mg(2+) pocket. Residues Ser70, 154–157 (FGYN), Lys177, and 182–183 (HR) each bind substrate.

Belongs to the HAM1 NTPase family. As to quaternary structure, homodimer. The cofactor is Mg(2+).

The catalysed reaction is XTP + H2O = XMP + diphosphate + H(+). It carries out the reaction dITP + H2O = dIMP + diphosphate + H(+). The enzyme catalyses ITP + H2O = IMP + diphosphate + H(+). Functionally, pyrophosphatase that catalyzes the hydrolysis of nucleoside triphosphates to their monophosphate derivatives, with a high preference for the non-canonical purine nucleotides XTP (xanthosine triphosphate), dITP (deoxyinosine triphosphate) and ITP. Seems to function as a house-cleaning enzyme that removes non-canonical purine nucleotides from the nucleotide pool, thus preventing their incorporation into DNA/RNA and avoiding chromosomal lesions. The protein is dITP/XTP pyrophosphatase of Xanthomonas campestris pv. campestris (strain 8004).